The primary structure comprises 172 residues: Adenine phosphoribosyltransferase (172 aa).

It belongs to the purine/pyrimidine phosphoribosyltransferase family. In terms of assembly, homodimer.

It localises to the cytoplasm. It catalyses the reaction AMP + diphosphate = 5-phospho-alpha-D-ribose 1-diphosphate + adenine. It functions in the pathway purine metabolism; AMP biosynthesis via salvage pathway; AMP from adenine: step 1/1. Its function is as follows. Catalyzes a salvage reaction resulting in the formation of AMP, that is energically less costly than de novo synthesis. In Trichormus variabilis (strain ATCC 29413 / PCC 7937) (Anabaena variabilis), this protein is Adenine phosphoribosyltransferase.